The following is a 600-amino-acid chain: UvrABC system protein C (600 aa).

The GIY-YIG domain maps to glutamate 15–valine 92. A UVR domain is found at threonine 197–threonine 232.

It belongs to the UvrC family. As to quaternary structure, interacts with UvrB in an incision complex.

Its subcellular location is the cytoplasm. Its function is as follows. The UvrABC repair system catalyzes the recognition and processing of DNA lesions. UvrC both incises the 5' and 3' sides of the lesion. The N-terminal half is responsible for the 3' incision and the C-terminal half is responsible for the 5' incision. The protein is UvrABC system protein C of Lactobacillus acidophilus (strain ATCC 700396 / NCK56 / N2 / NCFM).